A 395-amino-acid chain; its full sequence is Elongation factor Tu (395 aa).

In terms of domain architecture, tr-type G spans Lys-10 to Gln-204. Residues Gly-19 to Thr-26 are G1. Residue Gly-19–Thr-26 participates in GTP binding. Mg(2+) is bound at residue Thr-26. The segment at Gly-60–Asn-64 is G2. Positions Asp-81–Gly-84 are G3. GTP contacts are provided by residues Asp-81 to His-85 and Asn-136 to Asp-139. The G4 stretch occupies residues Asn-136–Asp-139. Residues Ser-174 to Leu-176 form a G5 region.

It belongs to the TRAFAC class translation factor GTPase superfamily. Classic translation factor GTPase family. EF-Tu/EF-1A subfamily. As to quaternary structure, monomer.

The protein resides in the cytoplasm. The catalysed reaction is GTP + H2O = GDP + phosphate + H(+). Functionally, GTP hydrolase that promotes the GTP-dependent binding of aminoacyl-tRNA to the A-site of ribosomes during protein biosynthesis. The sequence is that of Elongation factor Tu from Azobacteroides pseudotrichonymphae genomovar. CFP2.